Reading from the N-terminus, the 211-residue chain is Holliday junction resolvase RecU (211 aa).

Mg(2+) is bound by residues threonine 87, aspartate 89, aspartate 102, and glutamine 121.

It belongs to the RecU family. Mg(2+) is required as a cofactor.

Its subcellular location is the cytoplasm. The catalysed reaction is Endonucleolytic cleavage at a junction such as a reciprocal single-stranded crossover between two homologous DNA duplexes (Holliday junction).. Endonuclease that resolves Holliday junction intermediates in genetic recombination. Cleaves mobile four-strand junctions by introducing symmetrical nicks in paired strands. Promotes annealing of linear ssDNA with homologous dsDNA. Required for DNA repair, homologous recombination and chromosome segregation. The polypeptide is Holliday junction resolvase RecU (Limosilactobacillus fermentum (strain NBRC 3956 / LMG 18251) (Lactobacillus fermentum)).